A 229-amino-acid chain; its full sequence is Ion-translocating oxidoreductase complex subunit E (229 aa).

The next 5 helical transmembrane spans lie at 58–78 (LGLGLATLLVLTITNTIISLF), 82–102 (IPHDIRIPIYVMIIATAVTTI), 105–125 (LMNAFAFPVYQSLGIFVPLIV), 147–167 (AFDGFAMGLGMTLSLVVLGAI), and 201–221 (GLLLAILPPGAFIGLGLILAV).

The protein belongs to the NqrDE/RnfAE family. The complex is composed of six subunits: RnfA, RnfB, RnfC, RnfD, RnfE and RnfG.

It localises to the cell inner membrane. Functionally, part of a membrane-bound complex that couples electron transfer with translocation of ions across the membrane. The sequence is that of Ion-translocating oxidoreductase complex subunit E from Glaesserella parasuis serovar 5 (strain SH0165) (Haemophilus parasuis).